Consider the following 2430-residue polypeptide: Protein TASOR 2 (2430 aa).

Ser-19, Ser-219, and Ser-384 each carry phosphoserine. Disordered stretches follow at residues 416 to 488 and 577 to 648; these read LDRK…GETA and RGTS…SQSS. Ser-685 is subject to Phosphoserine. The segment at 704-727 is disordered; it reads LLLQQKPPDDPVVKPKDRPPSARV. Over residues 710–723 the composition is skewed to basic and acidic residues; the sequence is PPDDPVVKPKDRPP. Phosphoserine is present on residues Ser-1025, Ser-1087, and Ser-1172. Residues 1331 to 1360 are disordered; that stretch reads LTESREVSSADNVSVYPSVSEEPVENKERK. Position 1541 is a phosphoserine (Ser-1541). The interval 1700–1727 is disordered; it reads EAELHKETTGPGTAGPQSNTTSSLKGER. Polar residues predominate over residues 1714–1723; the sequence is GPQSNTTSSL. Ser-1848 bears the Phosphoserine mark. Lys-2007 is covalently cross-linked (Glycyl lysine isopeptide (Lys-Gly) (interchain with G-Cter in SUMO2)). Phosphoserine is present on residues Ser-2009, Ser-2037, Ser-2062, and Ser-2066. The tract at residues 2046–2069 is disordered; sequence SDPRPQGQPRRGYTASSLDSSSSW.

The protein belongs to the TASOR family.

The polypeptide is Protein TASOR 2 (Homo sapiens (Human)).